The sequence spans 630 residues: Transposase B from transposon PsiTn554 (630 aa).

One can recognise a Core-binding (CB) domain in the interval 216 to 302 (TYFKQLVKRY…ILEGLFSTLH (87 aa)). Positions 326-513 (AKPRFIDEFV…FDETLKNEFT (188 aa)) constitute a Tyr recombinase domain. Active-site residues include arginine 363, lysine 391, histidine 465, arginine 468, and histidine 491. Tyrosine 500 functions as the O-(3'-phospho-DNA)-tyrosine intermediate in the catalytic mechanism.

The protein belongs to the 'phage' integrase family.

This is Transposase B from transposon PsiTn554 (tnpB) from Staphylococcus aureus.